We begin with the raw amino-acid sequence, 190 residues long: Imidazoleglycerol-phosphate dehydratase (190 aa).

Belongs to the imidazoleglycerol-phosphate dehydratase family.

Its subcellular location is the cytoplasm. The enzyme catalyses D-erythro-1-(imidazol-4-yl)glycerol 3-phosphate = 3-(imidazol-4-yl)-2-oxopropyl phosphate + H2O. It functions in the pathway amino-acid biosynthesis; L-histidine biosynthesis; L-histidine from 5-phospho-alpha-D-ribose 1-diphosphate: step 6/9. The protein is Imidazoleglycerol-phosphate dehydratase of Nitratiruptor sp. (strain SB155-2).